A 270-amino-acid chain; its full sequence is uncharacterized protein (270 aa).

Basic and acidic residues-rich tracts occupy residues 1 to 13 (MSEF…KDLY) and 49 to 73 (EVER…KEEK). Disordered regions lie at residues 1 to 76 (MSEF…KQEE), 90 to 111 (STSP…PQTE), and 204 to 270 (KKRR…FRTE). Positions 90 to 102 (STSPAQEEQGSST) are enriched in polar residues. The segment covering 204 to 216 (KKRRPGQKQRAAK) has biased composition (basic residues). Basic and acidic residues predominate over residues 218 to 235 (LALERTKERDTKAREIKK). Positions 236 to 253 (QLKKKFHKRGGKKNKKKV) are enriched in basic residues.

This is an uncharacterized protein from Saccharomyces cerevisiae (strain ATCC 204508 / S288c) (Baker's yeast).